We begin with the raw amino-acid sequence, 167 residues long: Endoribonuclease YbeY (167 aa).

Zn(2+) contacts are provided by His-131, His-135, and His-141.

This sequence belongs to the endoribonuclease YbeY family. Zn(2+) serves as cofactor.

It is found in the cytoplasm. Single strand-specific metallo-endoribonuclease involved in late-stage 70S ribosome quality control and in maturation of the 3' terminus of the 16S rRNA. This chain is Endoribonuclease YbeY, found in Rickettsia prowazekii (strain Madrid E).